The sequence spans 81 residues: Photosystem I iron-sulfur center (81 aa).

4Fe-4S ferredoxin-type domains lie at 2 to 31 (SHSVKIYDTCIGCTQCVRACPLDVLEMVPW) and 39 to 68 (IASSPRTEDCVGCKRCETACPTDFLSIRVY). The [4Fe-4S] cluster site is built by Cys-11, Cys-14, Cys-17, Cys-21, Cys-48, Cys-51, Cys-54, and Cys-58.

As to quaternary structure, the G.violaceus PSI reaction center is composed of one copy each of PsaA,B,C,D,E,F,L,M and Z, and forms trimeric complexes. It depends on [4Fe-4S] cluster as a cofactor.

The protein resides in the cell inner membrane. The catalysed reaction is reduced [plastocyanin] + hnu + oxidized [2Fe-2S]-[ferredoxin] = oxidized [plastocyanin] + reduced [2Fe-2S]-[ferredoxin]. Apoprotein for the two 4Fe-4S centers FA and FB of photosystem I (PSI); essential for photochemical activity. FB is the terminal electron acceptor of PSI, donating electrons to ferredoxin. The C-terminus interacts with PsaA/B/D and helps assemble the protein into the PSI complex. Required for binding of PsaD and PsaE to PSI. PSI is a plastocyanin/cytochrome c6-ferredoxin oxidoreductase, converting photonic excitation into a charge separation, which transfers an electron from the donor P700 chlorophyll pair to the spectroscopically characterized acceptors A0, A1, FX, FA and FB in turn. The protein is Photosystem I iron-sulfur center of Gloeobacter violaceus (strain ATCC 29082 / PCC 7421).